Consider the following 129-residue polypeptide: MAKTPVRTRKRVKKQVADGMAHIHASFNNTIVTLTDRQGNALSWATAGGSGFRGSRKSTPFAAQVAADRAGAVAKEFGLKNIEVFVKGPGPGRESAIRALNAAGFKITNITDVTPIPHNGCRPPKKRRV.

The protein belongs to the universal ribosomal protein uS11 family. Part of the 30S ribosomal subunit. Interacts with proteins S7 and S18. Binds to IF-3.

Its function is as follows. Located on the platform of the 30S subunit, it bridges several disparate RNA helices of the 16S rRNA. Forms part of the Shine-Dalgarno cleft in the 70S ribosome. The sequence is that of Small ribosomal subunit protein uS11 from Colwellia psychrerythraea (strain 34H / ATCC BAA-681) (Vibrio psychroerythus).